Reading from the N-terminus, the 133-residue chain is ATP synthase epsilon chain (133 aa).

The protein belongs to the ATPase epsilon chain family. In terms of assembly, F-type ATPases have 2 components, CF(1) - the catalytic core - and CF(0) - the membrane proton channel. CF(1) has five subunits: alpha(3), beta(3), gamma(1), delta(1), epsilon(1). CF(0) has three main subunits: a, b and c.

It localises to the cell membrane. Functionally, produces ATP from ADP in the presence of a proton gradient across the membrane. In Bacillus cereus (strain ATCC 14579 / DSM 31 / CCUG 7414 / JCM 2152 / NBRC 15305 / NCIMB 9373 / NCTC 2599 / NRRL B-3711), this protein is ATP synthase epsilon chain.